Reading from the N-terminus, the 424-residue chain is MFS-type transporter opdF (424 aa).

Positions 1 to 10 (MSDTSLEKGN) are enriched in basic and acidic residues. The tract at residues 1–23 (MSDTSLEKGNEGPTAEAPKVAPP) is disordered. A run of 5 helical transmembrane segments spans residues 36 to 56 (VAGA…IALF), 102 to 122 (VPIA…SLST), 127 to 147 (LMLS…TPAM), 160 to 180 (IVGG…PLMV), and 187 to 207 (VGFG…LVFA). Asparagine 208 is a glycosylation site (N-linked (GlcNAc...) asparagine). The next 6 membrane-spanning stretches (helical) occupy residues 239-259 (LCVA…YIVV), 265-285 (GMST…SFFG), 299-319 (FNVM…LWLP), 329-349 (FAAL…VLIV), 364-384 (VLAF…AIAA), and 391-411 (TYTC…LAAL).

The protein belongs to the major facilitator superfamily. Monocarboxylate porter (TC 2.A.1.13) family.

The protein localises to the membrane. Functionally, MFS-type transporter; part of the gene cluster that mediates the biosynthesis of oxopyrrolidines, polyketide-amino acid hybrid compounds with feature structures of tetramic acid. The protein is MFS-type transporter opdF of Penicillium oxalicum (strain 114-2 / CGMCC 5302) (Penicillium decumbens).